Reading from the N-terminus, the 419-residue chain is Circumsporozoite protein (419 aa).

Positions 1-23 (MKNFNLLAVSSILLVDLFRTHWG) are cleaved as a signal peptide. Residues 50–111 (AQVRQSASRG…GNAGGNAGGN (62 aa)) form a disordered region. Positions 65–95 (NPKEEDGADKKKKKDEKQVEPKKPRENKLKQ) are enriched in basic and acidic residues. The interval 81–89 (KQVEPKKPR) is required for the binding to heparan sulfate proteoglycans (HSPGs) on the surface of host hepatocytes. The segment at 92-96 (KLKQP) is region I; contains the proteolytic cleavage site. A run of 38 repeats spans residues 99–102 (NADG), 103–106 (NAGG), 107–110 (NAGG), 111–114 (NAGG), 115–118 (NAGG), 119–122 (NAGG), 123–126 (NADG), 127–130 (NAGG), 131–134 (NAGG), 135–138 (NAGG), 139–142 (NAGG), 143–146 (NAGG), 147–150 (NADG), 151–154 (NAGG), 155–158 (NADG), 159–162 (NAGG), 163–166 (NADG), 167–170 (NAGG), 171–174 (NAGG), 175–178 (NAGG), 179–182 (NADG), 183–186 (NAGG), 187–190 (NAGG), 191–194 (NAGG), 195–198 (NAGG), 199–202 (NAGG), 203–206 (NAGG), 207–210 (NAGG), 211–214 (NADG), 215–218 (NAGG), 219–222 (NAGG), 223–226 (NAGG), 227–230 (NADG), 231–234 (NAGG), 235–238 (NAGG), 239–242 (NAGG), 243–246 (NAGG), and 247–250 (NAGG). Residues 99 to 314 (NADGNAGGNA…GGNAGANAGN (216 aa)) are 54 X 4 AA approximate tandem repeats of N-A-G-G. Positions 146–237 (GNADGNAGGN…ADGNAGGNAG (92 aa)) are disordered. One copy of the 39; approximate repeat lies at 251-254 (TAGG). 13 repeat units span residues 255–258 (NADG), 259–262 (NAGG), 263–266 (NAGG), 267–270 (NAGG), 271–274 (NAGG), 275–278 (NAGG), 279–282 (NAGG), 283–286 (NAGG), 287–290 (NAGG), 291–294 (NAGG), 295–298 (NAGG), 299–302 (NAGG), and 303–306 (NAGG). The stretch at 307–310 (NAGA) is one 53; approximate repeat. The stretch at 311–314 (NAGN) is one 54; approximate repeat. Residues 312 to 332 (AGNKKAGDAGAGQGQNNEAAN) are disordered. Residues 345–397 (KIRSTISTEWSPCSVTCGKGVRMRKKVSAANKKPEELDVNDLETEVCTMDKCA) form the TSP type-1 domain. 2 disulfide bridges follow: Cys-357-Cys-391 and Cys-361-Cys-396. Residue Thr-360 is glycosylated (O-linked (Fuc) threonine). Cys-396 is lipidated: GPI-anchor amidated cysteine. A propeptide spans 397 to 419 (AGIFNVVSNSLRLVILLVLALFN) (removed in mature form).

This sequence belongs to the plasmodium circumsporozoite protein family. In terms of processing, during host cell invasion, proteolytically cleaved at the cell membrane in the region I by a papain-like cysteine protease of parasite origin. Cleavage is triggered by the sporozoite contact with highly sulfated heparan sulfate proteoglycans (HSPGs) present on the host hepatocyte cell surface. Cleavage exposes the TSP type-1 (TSR) domain and is required for productive invasion of host hepatocytes but not for adhesion to the host cell membrane. Cleavage is dispensable for sporozoite development in the oocyst, motility and for traversal of host and vector cells. O-glycosylated; maybe by POFUT2.

It localises to the cell membrane. The protein localises to the cytoplasm. Essential sporozoite protein. In the mosquito vector, required for sporozoite development in the oocyst, migration through the vector hemolymph and entry into the vector salivary glands. In the vertebrate host, required for sporozoite migration through the host dermis and infection of host hepatocytes. Binds to highly sulfated heparan sulfate proteoglycans (HSPGs) on the surface of host hepatocytes. Functionally, in the vertebrate host, binds to highly sulfated heparan sulfate proteoglycans (HSPGs) on the surface of host hepatocytes and is required for sporozoite invasion of the host hepatocytes. The chain is Circumsporozoite protein from Plasmodium cynomolgi (strain Mulligan/NIH).